A 643-amino-acid polypeptide reads, in one-letter code: Long-chain fatty acid transport protein 4 (643 aa).

The next 2 helical transmembrane spans lie at 20 to 42 and 139 to 156; these read LPWTQVGFSLLFLYLGSGGWRFI and FVGLWLGMAKLGVEAALI. Position 243–254 (243–254) interacts with AMP; sequence YIYTSGTTGLPK.

The protein belongs to the ATP-dependent AMP-binding enzyme family.

The protein resides in the endoplasmic reticulum membrane. It carries out the reaction a fatty acid(in) = a fatty acid(out). It catalyses the reaction (9Z,12Z)-octadecadienoate(out) = (9Z,12Z)-octadecadienoate(in). The catalysed reaction is (9Z)-octadecenoate(out) = (9Z)-octadecenoate(in). The enzyme catalyses hexadecanoate(out) = hexadecanoate(in). It carries out the reaction a long-chain fatty acid + ATP + CoA = a long-chain fatty acyl-CoA + AMP + diphosphate. It catalyses the reaction (5Z,8Z,11Z,14Z)-eicosatetraenoate + ATP + CoA = (5Z,8Z,11Z,14Z)-eicosatetraenoyl-CoA + AMP + diphosphate. The catalysed reaction is (9Z)-octadecenoate + ATP + CoA = (9Z)-octadecenoyl-CoA + AMP + diphosphate. The enzyme catalyses hexadecanoate + ATP + CoA = hexadecanoyl-CoA + AMP + diphosphate. It carries out the reaction (E)-hexadec-2-enoate + ATP + CoA = (2E)-hexadecenoyl-CoA + AMP + diphosphate. It catalyses the reaction a very long-chain fatty acid + ATP + CoA = a very long-chain fatty acyl-CoA + AMP + diphosphate. The catalysed reaction is tetracosanoate + ATP + CoA = tetracosanoyl-CoA + AMP + diphosphate. Mediates the import of long-chain fatty acids (LCFA) into the cell by facilitating their transport across cell membranes. Appears to be the principal fatty acid transporter in small intestinal enterocytes. Also functions as an acyl-CoA ligase catalyzing the ATP-dependent formation of fatty acyl-CoA using LCFA and very-long-chain fatty acids (VLCFA) as substrates, which prevents fatty acid efflux from cells and might drive more fatty acid uptake. Plays a role in the formation of the epidermal barrier. Required for fat absorption in early embryogenesis. Probably involved in fatty acid transport across the blood barrier. Indirectly inhibits RPE65 via substrate competition and via production of VLCFA derivatives like lignoceroyl-CoA. Prevents light-induced degeneration of rods and cones. The chain is Long-chain fatty acid transport protein 4 (SLC27A4) from Pongo abelii (Sumatran orangutan).